The chain runs to 285 residues: uncharacterized protein (285 aa).

This is an uncharacterized protein from Mycoplasma pneumoniae (strain ATCC 29342 / M129 / Subtype 1) (Mycoplasmoides pneumoniae).